The primary structure comprises 167 residues: Sporulation membrane protein YtrI (167 aa).

The chain crosses the membrane as a helical span at residues 15–35; the sequence is FFAGMMCGAVISWFFFLFTYG.

It is found in the cell membrane. Involved in sporulation. This chain is Sporulation membrane protein YtrI (ytrI), found in Bacillus subtilis (strain 168).